We begin with the raw amino-acid sequence, 422 residues long: UDP-N-acetylglucosamine 1-carboxyvinyltransferase (422 aa).

A phosphoenolpyruvate-binding site is contributed by 22–23 (KN). UDP-N-acetyl-alpha-D-glucosamine is bound at residue Arg-93. Cys-117 acts as the Proton donor in catalysis. At Cys-117 the chain carries 2-(S-cysteinyl)pyruvic acid O-phosphothioketal. UDP-N-acetyl-alpha-D-glucosamine contacts are provided by residues 122–126 (RPVDL), Asp-308, and Leu-330.

Belongs to the EPSP synthase family. MurA subfamily.

The protein resides in the cytoplasm. It carries out the reaction phosphoenolpyruvate + UDP-N-acetyl-alpha-D-glucosamine = UDP-N-acetyl-3-O-(1-carboxyvinyl)-alpha-D-glucosamine + phosphate. The protein operates within cell wall biogenesis; peptidoglycan biosynthesis. Its function is as follows. Cell wall formation. Adds enolpyruvyl to UDP-N-acetylglucosamine. The protein is UDP-N-acetylglucosamine 1-carboxyvinyltransferase of Helicobacter pylori (strain ATCC 700392 / 26695) (Campylobacter pylori).